Reading from the N-terminus, the 206-residue chain is Ribosomal RNA small subunit methyltransferase G (206 aa).

Residues G71, F76, 125-126 (IE), and R139 each bind S-adenosyl-L-methionine.

It belongs to the methyltransferase superfamily. RNA methyltransferase RsmG family.

The protein resides in the cytoplasm. The catalysed reaction is guanosine(527) in 16S rRNA + S-adenosyl-L-methionine = N(7)-methylguanosine(527) in 16S rRNA + S-adenosyl-L-homocysteine. In terms of biological role, specifically methylates the N7 position of guanine in position 527 of 16S rRNA. The chain is Ribosomal RNA small subunit methyltransferase G from Cereibacter sphaeroides (strain ATCC 17029 / ATH 2.4.9) (Rhodobacter sphaeroides).